Reading from the N-terminus, the 387-residue chain is Patatin-05 (387 aa).

The first 23 residues, 1–23, serve as a signal peptide directing secretion; it reads MATTKSVLVLIFMILATTSSTFA. Residues 32 to 230 form the PNPLA domain; the sequence is LSIDGGGIKG…TVADPALLSV (199 aa). The GXGXXG signature appears at 36–41; it reads GGGIKG. The GXSXG motif lies at 75–79; the sequence is GTSTG. Catalysis depends on S77, which acts as the Nucleophile. N115 and N203 each carry an N-linked (GlcNAc...) asparagine glycan. D216 acts as the Proton acceptor in catalysis. The DGA/G motif lies at 216 to 218; sequence DGA.

It belongs to the patatin family. Tuber.

The protein localises to the vacuole. Functionally, probable lipolytic acyl hydrolase (LAH), an activity which is thought to be involved in the response of tubers to pathogens. In Solanum tuberosum (Potato), this protein is Patatin-05 (pat1-k1).